The sequence spans 445 residues: Chromosome partition protein MukF (445 aa).

Residues 212-240 (LDETSGNLRELQDTLNAAGDKLQEQLLRI) form a leucine-zipper region.

This sequence belongs to the MukF family. Interacts, and probably forms a ternary complex, with MukE and MukB via its C-terminal region. The complex formation is stimulated by calcium or magnesium. It is required for an interaction between MukE and MukB.

Its subcellular location is the cytoplasm. The protein localises to the nucleoid. Its function is as follows. Involved in chromosome condensation, segregation and cell cycle progression. May participate in facilitating chromosome segregation by condensation DNA from both sides of a centrally located replisome during cell division. Not required for mini-F plasmid partitioning. Probably acts via its interaction with MukB and MukE. Overexpression results in anucleate cells. It has a calcium binding activity. This is Chromosome partition protein MukF from Mannheimia succiniciproducens (strain KCTC 0769BP / MBEL55E).